The chain runs to 354 residues: Ferredoxin--NADP reductase, chloroplastic (354 aa).

Residues 1-35 constitute a chloroplast transit peptide; that stretch reads MASLRKPSNHADRACSRRLRVATRVAGRRMCRPVA. The 130-residue stretch at 69–198 folds into the FAD-binding FR-type domain; that stretch reads KAPFKAKVRS…TGPTGKVLLL (130 aa). Lys-118 and Lys-124 each carry N6,N6,N6-trimethyllysine. FAD contacts are provided by residues 130–133, 151–153, and Tyr-157; these read RLYS and CVR. Residues Ser-133 and Arg-153 each contribute to the NADP(+) site. Lys-170 is modified (N6,N6-dimethyllysine). Residues 172–174 and Thr-213 each bind FAD; that span reads LCS. NADP(+) is bound by residues Thr-213, 245-246, 275-276, Lys-285, 313-314, and Glu-352; these read VG, SR, and GL.

This sequence belongs to the ferredoxin--NADP reductase type 1 family. FAD serves as cofactor.

The protein resides in the plastid. It is found in the chloroplast stroma. It localises to the chloroplast thylakoid membrane. The enzyme catalyses 2 reduced [2Fe-2S]-[ferredoxin] + NADP(+) + H(+) = 2 oxidized [2Fe-2S]-[ferredoxin] + NADPH. It functions in the pathway energy metabolism; photosynthesis. In terms of biological role, may play a key role in regulating the relative amounts of cyclic and non-cyclic electron flow to meet the demands of the plant for ATP and reducing power. The sequence is that of Ferredoxin--NADP reductase, chloroplastic (PETH) from Chlamydomonas reinhardtii (Chlamydomonas smithii).